Reading from the N-terminus, the 225-residue chain is DNA-binding response regulator MtrA (225 aa).

One can recognise a Response regulatory domain in the interval 4-117 (RILVVDDDAS…ELVARVRARL (114 aa)). Asp53 bears the 4-aspartylphosphate mark. A DNA-binding region (ompR/PhoB-type) is located at residues 125–224 (AEMLSIADVE…VRGVGYKAGP (100 aa)).

Phosphorylated by MtrB.

Member of the two-component regulatory system MtrA/MtrB. The protein is DNA-binding response regulator MtrA (mtrA) of Mycolicibacterium paratuberculosis (strain ATCC BAA-968 / K-10) (Mycobacterium paratuberculosis).